Reading from the N-terminus, the 429-residue chain is Patatin-like phospholipase domain-containing protein 5 (429 aa).

The region spanning 12–181 (LSFSGAGYLG…SNNLPFADCP (170 aa)) is the PNPLA domain. A GXGXXG motif is present at residues 16 to 21 (GAGYLG). Residues 47-51 (GSSSG) carry the GXSXG motif. Ser49 acts as the Nucleophile in catalysis. Asp168 acts as the Proton acceptor in catalysis. The short motif at 168 to 170 (DGA) is the DGA/G element.

Expressed in brain and pituitary gland.

The catalysed reaction is a triacylglycerol + H2O = a diacylglycerol + a fatty acid + H(+). In terms of biological role, has abundant triacylglycerol lipase activity. The polypeptide is Patatin-like phospholipase domain-containing protein 5 (Homo sapiens (Human)).